The primary structure comprises 622 residues: MESADSTGKGSIEQSESQRQSQMDRLDREEAFYQFVNNLNEDDYRLMRDNNLLGTPGEITKEELLRRLQQIKEGPPQPSTEETRGDSVSTGGDPAEDSSNGDSIIDWLNSVRQTGNTTRSGQRGNQSWRAVSRTNPNSGDFRFSLEINVNRTSGNPSMPSLDQSAEMPGAEDMEVSSQGEAENEPEPIPIATRSAPAEVTVEEAPIQRGQRRARSRSPDQRRTRARTDRSRSPLHHAVDPPIRRAPHSSSQTVDTSNTEEAEGSSRTRHHVSSQVQNSSSSNETEGSSRTRQHIPARQQVLGTEGQSQSTVHLSNPETRSSSQTPQTDSSTNAETTGTGQRPPTIVLDLQVRRVRPGDYRQRDSIANRTRSRSQTPNNTVTYESERGGFRRTFSRSERAGVRTYVSTIRIPIRRILNTGLSETTSVAIQTMLRQIMTGFGELSYFMYNDNDTDPNNPTAVSPTAAVPGEAQNNANAEVRAPSAEPTEPVAPVETDEGSNVSTTATRREGRNSRGAVTFEESGSLPFLSLAQFFLLNEDDDDQPRGLTKEQIDNLSTRNFGENDALKTCSVCITEYTEGNKLRKLPCSHEYHIHCIDRWLSENSTCPICRRAVLVASNRESIV.

Disordered regions lie at residues Met1–Leu26, Arg67–Arg386, and Asn473–Gly514. Residues Ser11–Ser21 are compositionally biased toward low complexity. Polar residues-rich tracts occupy residues Ser110–Ser138 and Ile147–Gln163. Over residues Arg216–Ile242 the composition is skewed to basic and acidic residues. The span at His247 to Ser256 shows a compositional bias: polar residues. The segment covering Ser272–Arg289 has biased composition (low complexity). The span at Val300–Glu317 shows a compositional bias: polar residues. The segment covering Thr318–Thr331 has biased composition (low complexity). Positions Asn332–Arg341 are enriched in polar residues. The segment covering Arg355 to Ile365 has biased composition (basic and acidic residues). Residues Ala366 to Tyr382 are compositionally biased toward polar residues. The RING-type; atypical zinc-finger motif lies at Cys568–Arg609. The short motif at Glu619–Val622 is the PDZ-binding element.

It belongs to the RNF12 family. As to quaternary structure, forms homodimers through the C-terminal region. The N-terminus interacts with the homeobox of LIM/homeobox factor lhx1/lim1, with lhx3/lim3 and lhx5/lim5, and with the N-terminus of ldb1. Shows overlapping expression with lhx1/lim1 and ldb1 in the gastrula mesoderm, and expression overlaps with ldb1 throughout early embryogenesis. After gastrulation, expression is gradually restricted to tissues originated from the ectoderm, the neuroectoderm, neural crest and epidermis, and subsequently to the neural tube as well as the head and tailbud region.

Its subcellular location is the nucleus. The enzyme catalyses S-ubiquitinyl-[E2 ubiquitin-conjugating enzyme]-L-cysteine + [acceptor protein]-L-lysine = [E2 ubiquitin-conjugating enzyme]-L-cysteine + N(6)-ubiquitinyl-[acceptor protein]-L-lysine.. Its pathway is protein modification; protein ubiquitination. Acts as an E3 ubiquitin-protein ligase specific for ldb1, mediating ubiquitination and proteasome-dependent degradation of excess ldb1 in a RING-dependent manner. Does not degrade ldb1 bound to lhx1/lim1, nor lim1 itself and thus contributes to the establishment of proper ldb1-lhx1/lim1 stoichiometry and the formation of a ldb1-lhx1/lim1 complex. Interferes with Spemann organizer function and suppresses secondary axis formation induced by ldb1 and lhx1/lim1. This Xenopus laevis (African clawed frog) protein is E3 ubiquitin-protein ligase RNF12-A (rnf12-a).